A 421-amino-acid chain; its full sequence is ATP-dependent RNA helicase RhlB (421 aa).

Residues 9-37 (QKFSDFALHPKVVEALEKKGFHNCTPIQA) carry the Q motif motif. A Helicase ATP-binding domain is found at 40–219 (LPLTLAGRDV…FEQMNNAEYI (180 aa)). 53 to 60 (AQTGTGKT) is a binding site for ATP. The DEAD box signature appears at 165-168 (DEAD). In terms of domain architecture, Helicase C-terminal spans 245–390 (RLLQTLIEEE…VSKYNPDALM (146 aa)). Positions 392–421 (DLPKPLRLTRPRTGNGPRRTGAPRNRRRSG) are disordered. Over residues 402–414 (PRTGNGPRRTGAP) the composition is skewed to low complexity.

This sequence belongs to the DEAD box helicase family. RhlB subfamily. As to quaternary structure, component of the RNA degradosome, which is a multiprotein complex involved in RNA processing and mRNA degradation.

It localises to the cytoplasm. It carries out the reaction ATP + H2O = ADP + phosphate + H(+). Its function is as follows. DEAD-box RNA helicase involved in RNA degradation. Has RNA-dependent ATPase activity and unwinds double-stranded RNA. This chain is ATP-dependent RNA helicase RhlB, found in Escherichia coli O157:H7 (strain EC4115 / EHEC).